Consider the following 271-residue polypeptide: Formamidopyrimidine-DNA glycosylase (271 aa).

The active-site Schiff-base intermediate with DNA is the proline 2. Residue glutamate 3 is the Proton donor of the active site. The active-site Proton donor; for beta-elimination activity is the lysine 58. Histidine 92, arginine 111, and arginine 152 together coordinate DNA. Residues 237–271 (MVYGREGEACRHCGGELKHATIGQRATVWCAACQR) form an FPG-type zinc finger. Arginine 261 functions as the Proton donor; for delta-elimination activity in the catalytic mechanism.

This sequence belongs to the FPG family. As to quaternary structure, monomer. The cofactor is Zn(2+).

It catalyses the reaction Hydrolysis of DNA containing ring-opened 7-methylguanine residues, releasing 2,6-diamino-4-hydroxy-5-(N-methyl)formamidopyrimidine.. The catalysed reaction is 2'-deoxyribonucleotide-(2'-deoxyribose 5'-phosphate)-2'-deoxyribonucleotide-DNA = a 3'-end 2'-deoxyribonucleotide-(2,3-dehydro-2,3-deoxyribose 5'-phosphate)-DNA + a 5'-end 5'-phospho-2'-deoxyribonucleoside-DNA + H(+). Involved in base excision repair of DNA damaged by oxidation or by mutagenic agents. Acts as a DNA glycosylase that recognizes and removes damaged bases. Has a preference for oxidized purines, such as 7,8-dihydro-8-oxoguanine (8-oxoG). Has AP (apurinic/apyrimidinic) lyase activity and introduces nicks in the DNA strand. Cleaves the DNA backbone by beta-delta elimination to generate a single-strand break at the site of the removed base with both 3'- and 5'-phosphates. The polypeptide is Formamidopyrimidine-DNA glycosylase (Xanthomonas campestris pv. campestris (strain ATCC 33913 / DSM 3586 / NCPPB 528 / LMG 568 / P 25)).